We begin with the raw amino-acid sequence, 255 residues long: 5'-nucleotidase SurE (255 aa).

Positions 8, 9, 40, and 93 each coordinate a divalent metal cation.

This sequence belongs to the SurE nucleotidase family. Requires a divalent metal cation as cofactor.

It localises to the cytoplasm. The enzyme catalyses a ribonucleoside 5'-phosphate + H2O = a ribonucleoside + phosphate. In terms of biological role, nucleotidase that shows phosphatase activity on nucleoside 5'-monophosphates. The protein is 5'-nucleotidase SurE of Bradyrhizobium diazoefficiens (strain JCM 10833 / BCRC 13528 / IAM 13628 / NBRC 14792 / USDA 110).